Consider the following 334-residue polypeptide: GTPase Obg (334 aa).

One can recognise an Obg domain in the interval 1–159 (MRFVDEVVIK…KEVRLELNLL (159 aa)). In terms of domain architecture, OBG-type G spans 160–331 (ADVALLGLPN…LAKKLNEFLQ (172 aa)). Residues 166-173 (GLPNAGKS), 191-195 (FTTMY), 212-215 (DIPG), 282-285 (NKID), and 312-314 (SAA) each bind GTP. Residues Ser-173 and Thr-193 each contribute to the Mg(2+) site.

This sequence belongs to the TRAFAC class OBG-HflX-like GTPase superfamily. OBG GTPase family. Monomer. The cofactor is Mg(2+).

The protein localises to the cytoplasm. In terms of biological role, an essential GTPase which binds GTP, GDP and possibly (p)ppGpp with moderate affinity, with high nucleotide exchange rates and a fairly low GTP hydrolysis rate. Plays a role in control of the cell cycle, stress response, ribosome biogenesis and in those bacteria that undergo differentiation, in morphogenesis control. This chain is GTPase Obg, found in Francisella tularensis subsp. tularensis (strain FSC 198).